Consider the following 150-residue polypeptide: Large ribosomal subunit protein bL9 (150 aa).

The protein belongs to the bacterial ribosomal protein bL9 family.

Functionally, binds to the 23S rRNA. This chain is Large ribosomal subunit protein bL9, found in Shewanella denitrificans (strain OS217 / ATCC BAA-1090 / DSM 15013).